The sequence spans 1073 residues: Carbamoyl phosphate synthase large chain (1073 aa).

A carboxyphosphate synthetic domain region spans residues 1–402 (MPRRIDVRKV…ALQKAIRMLD (402 aa)). ATP contacts are provided by Arg129, Arg169, Gly175, Gly176, Lys208, Leu210, Glu215, Gly241, Val242, His243, Gln284, and Glu299. The ATP-grasp 1 domain occupies 133–328 (RETMMKAGLP…LAYIAAKLAL (196 aa)). The Mg(2+) site is built by Gln284, Glu299, and Asn301. Positions 284, 299, and 301 each coordinate Mn(2+). Positions 403 to 555 (IGEPGVVAGP…MSYNAYEDDE (153 aa)) are oligomerization domain. Residues 556-944 (PITTGRPRLI…LKSWLSVQGN (389 aa)) form a carbamoyl phosphate synthetic domain region. The 191-residue stretch at 681–871 (SQLLEELGIK…LMRAAAEAAL (191 aa)) folds into the ATP-grasp 2 domain. The ATP site is built by Arg717, Lys756, Leu758, Glu763, Gly787, Val788, His789, Ser790, Gln830, and Glu842. The Mg(2+) site is built by Gln830, Glu842, and Asn844. Residues Gln830, Glu842, and Asn844 each contribute to the Mn(2+) site. The MGS-like domain occupies 944-1073 (NRIPPAGSIV…EYWGPNVEPF (130 aa)). The segment at 945-1073 (RIPPAGSIVL…EYWGPNVEPF (129 aa)) is allosteric domain.

It belongs to the CarB family. In terms of assembly, composed of two chains; the small (or glutamine) chain promotes the hydrolysis of glutamine to ammonia, which is used by the large (or ammonia) chain to synthesize carbamoyl phosphate. Tetramer of heterodimers (alpha,beta)4. The cofactor is Mg(2+). Requires Mn(2+) as cofactor.

The enzyme catalyses hydrogencarbonate + L-glutamine + 2 ATP + H2O = carbamoyl phosphate + L-glutamate + 2 ADP + phosphate + 2 H(+). It carries out the reaction hydrogencarbonate + NH4(+) + 2 ATP = carbamoyl phosphate + 2 ADP + phosphate + 2 H(+). It participates in amino-acid biosynthesis; L-arginine biosynthesis; carbamoyl phosphate from bicarbonate: step 1/1. It functions in the pathway pyrimidine metabolism; UMP biosynthesis via de novo pathway; (S)-dihydroorotate from bicarbonate: step 1/3. Functionally, large subunit of the glutamine-dependent carbamoyl phosphate synthetase (CPSase). CPSase catalyzes the formation of carbamoyl phosphate from the ammonia moiety of glutamine, carbonate, and phosphate donated by ATP, constituting the first step of 2 biosynthetic pathways, one leading to arginine and/or urea and the other to pyrimidine nucleotides. The large subunit (synthetase) binds the substrates ammonia (free or transferred from glutamine from the small subunit), hydrogencarbonate and ATP and carries out an ATP-coupled ligase reaction, activating hydrogencarbonate by forming carboxy phosphate which reacts with ammonia to form carbamoyl phosphate. This is Carbamoyl phosphate synthase large chain from Hyperthermus butylicus (strain DSM 5456 / JCM 9403 / PLM1-5).